The following is a 357-amino-acid chain: Protein-arginine kinase (357 aa).

Positions 24 to 256 constitute a Phosphagen kinase C-terminal domain; it reads VIISSRVRLA…LQLVTQERAA (233 aa). ATP is bound by residues 27-31, His-93, Arg-127, 178-182, and 209-214; these read SSRVR, RASVM, and RGLYGE. The RDXXRA motif of the pArg binding pocket involved in allosteric regulation motif lies at 339 to 344; the sequence is RDIFRA.

It belongs to the ATP:guanido phosphotransferase family.

It carries out the reaction L-arginyl-[protein] + ATP = N(omega)-phospho-L-arginyl-[protein] + ADP + H(+). Its activity is regulated as follows. Appears to be allosterically activated by the binding of pArg-containing polypeptides to the pArg-binding pocket localized in the C-terminal domain of McsB. Catalyzes the specific phosphorylation of arginine residues in proteins. The chain is Protein-arginine kinase from Desulforamulus reducens (strain ATCC BAA-1160 / DSM 100696 / MI-1) (Desulfotomaculum reducens).